We begin with the raw amino-acid sequence, 178 residues long: Large ribosomal subunit protein uL13m (178 aa).

It belongs to the universal ribosomal protein uL13 family. In terms of assembly, component of the mitochondrial ribosome large subunit (39S) which comprises a 16S rRNA and about 50 distinct proteins. Interacts with OXA1L.

The protein localises to the mitochondrion. The protein is Large ribosomal subunit protein uL13m (MRPL13) of Bos taurus (Bovine).